The following is a 305-amino-acid chain: Homoserine kinase (305 aa).

An ATP-binding site is contributed by 90–100 (PLARGLGSSAS).

The protein belongs to the GHMP kinase family. Homoserine kinase subfamily.

It localises to the cytoplasm. It catalyses the reaction L-homoserine + ATP = O-phospho-L-homoserine + ADP + H(+). It participates in amino-acid biosynthesis; L-threonine biosynthesis; L-threonine from L-aspartate: step 4/5. Its function is as follows. Catalyzes the ATP-dependent phosphorylation of L-homoserine to L-homoserine phosphate. The chain is Homoserine kinase from Staphylococcus saprophyticus subsp. saprophyticus (strain ATCC 15305 / DSM 20229 / NCIMB 8711 / NCTC 7292 / S-41).